A 296-amino-acid polypeptide reads, in one-letter code: NAD kinase (296 aa).

Asp-78 acts as the Proton acceptor in catalysis. Residues 78-79, 152-153, Arg-180, Asp-182, and Gln-251 contribute to the NAD(+) site; these read DG and ND.

Belongs to the NAD kinase family. A divalent metal cation serves as cofactor.

It is found in the cytoplasm. It carries out the reaction NAD(+) + ATP = ADP + NADP(+) + H(+). Involved in the regulation of the intracellular balance of NAD and NADP, and is a key enzyme in the biosynthesis of NADP. Catalyzes specifically the phosphorylation on 2'-hydroxyl of the adenosine moiety of NAD to yield NADP. This Neisseria gonorrhoeae (strain ATCC 700825 / FA 1090) protein is NAD kinase.